Reading from the N-terminus, the 538-residue chain is Chaperonin GroEL (538 aa).

Residues 29 to 32 (TLGP), 86 to 90 (DGTTT), G413, 479 to 481 (DAL), and D495 each bind ATP.

This sequence belongs to the chaperonin (HSP60) family. In terms of assembly, forms a cylinder of 14 subunits composed of two heptameric rings stacked back-to-back. Interacts with the co-chaperonin GroES.

It is found in the cytoplasm. The catalysed reaction is ATP + H2O + a folded polypeptide = ADP + phosphate + an unfolded polypeptide.. Its function is as follows. Together with its co-chaperonin GroES, plays an essential role in assisting protein folding. The GroEL-GroES system forms a nano-cage that allows encapsulation of the non-native substrate proteins and provides a physical environment optimized to promote and accelerate protein folding. In Thermotoga neapolitana, this protein is Chaperonin GroEL.